The following is a 200-amino-acid chain: Small ribosomal subunit protein uS4 (200 aa).

Residues 22-42 (TGKELQKRPYPPGQHGPGQRR) form a disordered region. In terms of domain architecture, S4 RNA-binding spans 92–152 (SRLDNLVYRL…EKSRNLQVIK (61 aa)).

This sequence belongs to the universal ribosomal protein uS4 family. In terms of assembly, part of the 30S ribosomal subunit. Contacts protein S5. The interaction surface between S4 and S5 is involved in control of translational fidelity.

In terms of biological role, one of the primary rRNA binding proteins, it binds directly to 16S rRNA where it nucleates assembly of the body of the 30S subunit. Functionally, with S5 and S12 plays an important role in translational accuracy. This Geobacillus kaustophilus (strain HTA426) protein is Small ribosomal subunit protein uS4.